The chain runs to 304 residues: uncharacterized protein (304 aa).

Residues 1-15 form the signal peptide; the sequence is MTRPRPPLGPAMAGA. Positions 28–151 constitute a Thioredoxin domain; that stretch reads NAAASTDADR…LSRWVDSLLS (124 aa).

This is an uncharacterized protein from Mycobacterium bovis (strain ATCC BAA-935 / AF2122/97).